We begin with the raw amino-acid sequence, 555 residues long: Cytochrome P450 78A11 (555 aa).

Residues 12–32 (VDATWWAYALPALLGADTLCA) traverse the membrane as a helical segment. Position 495 (Cys495) interacts with heme.

It belongs to the cytochrome P450 family. Requires heme as cofactor. In terms of tissue distribution, expressed in seedlings, shoot apices and young panicles, but not in mature leaves, calli and roots.

The protein resides in the membrane. In terms of biological role, involved in the regular timing (plastochron) of lateral organs formation. May regulate the rate of leaf initiation and the duration of vegetative phase. Seems to be redundant to the function of PLASTOCHRON2, but to act in an independent pathway. The chain is Cytochrome P450 78A11 (CYP78A11) from Oryza sativa subsp. japonica (Rice).